Consider the following 134-residue polypeptide: NAD(P)H-quinone oxidoreductase subunit 3 (134 aa).

3 helical membrane-spanning segments follow: residues 20 to 40, 78 to 98, and 103 to 123; these read GYDA…LALV, MFAL…PWAV, and LGLL…VALA.

Belongs to the complex I subunit 3 family. As to quaternary structure, NDH-1 can be composed of about 15 different subunits; different subcomplexes with different compositions have been identified which probably have different functions.

The protein resides in the cellular thylakoid membrane. The enzyme catalyses a plastoquinone + NADH + (n+1) H(+)(in) = a plastoquinol + NAD(+) + n H(+)(out). It carries out the reaction a plastoquinone + NADPH + (n+1) H(+)(in) = a plastoquinol + NADP(+) + n H(+)(out). In terms of biological role, NDH-1 shuttles electrons from an unknown electron donor, via FMN and iron-sulfur (Fe-S) centers, to quinones in the respiratory and/or the photosynthetic chain. The immediate electron acceptor for the enzyme in this species is believed to be plastoquinone. Couples the redox reaction to proton translocation, and thus conserves the redox energy in a proton gradient. Cyanobacterial NDH-1 also plays a role in inorganic carbon-concentration. The polypeptide is NAD(P)H-quinone oxidoreductase subunit 3 (Prochlorococcus marinus (strain MIT 9303)).